The following is a 185-amino-acid chain: MTMIPDTELVLVVAADENNVIGLDGGVPWHYPEDVRQYKNRIAGHPIILGRRTFESMKPIPDCYTVVLTSDDRRSADSETVEYATTPQIAVEAAARAGASGAFAGDSAGADSSPPVTYVIGGEAVYDLFLPFAGRVFLSRIHEHNEGDRYFPDLGAEWTELSREPHDGFDVIEYEQASPRPLDDL.

Positions 8 to 185 (ELVLVVAADE…QASPRPLDDL (178 aa)) constitute a DHFR domain.

It belongs to the dihydrofolate reductase family.

The catalysed reaction is (6S)-5,6,7,8-tetrahydrofolate + NADP(+) = 7,8-dihydrofolate + NADPH + H(+). It functions in the pathway cofactor biosynthesis; tetrahydrofolate biosynthesis; 5,6,7,8-tetrahydrofolate from 7,8-dihydrofolate: step 1/1. Its function is as follows. Key enzyme in folate metabolism. Catalyzes an essential reaction for de novo glycine and purine synthesis, and for DNA precursor synthesis. The protein is Dihydrofolate reductase 1 (folA1) of Haloarcula marismortui (strain ATCC 43049 / DSM 3752 / JCM 8966 / VKM B-1809) (Halobacterium marismortui).